We begin with the raw amino-acid sequence, 408 residues long: Multidrug resistance protein MdtG (408 aa).

A run of 10 helical transmembrane segments spans residues 16 to 36 (LIVAWLGCFLTGAAFSLVMPF), 58 to 78 (IVFSITFLFSAIASPFWGGLA), 92 to 112 (LGMGIVMVLMGLAQNIWQFLI), 115 to 135 (ALLGLLGGFVPNANALIATQV), 146 to 166 (TLSTGGVSGALLGPMAGGLLA), 173 to 193 (PVFFITASVLILCFFVTLFCI), 221 to 241 (ILSLFVTTLIIQVATGSIAPI), 256 to 276 (VAFISGMIASVPGVAALLSAP), 290 to 310 (ILITALIFSVLLLIPMSYVQT), and 378 to 398 (AVFLVTAGVVLFNAVYSWNSL).

This sequence belongs to the major facilitator superfamily. DHA1 family. MdtG (TC 2.A.1.2.20) subfamily.

The protein resides in the cell inner membrane. Functionally, confers resistance to fosfomycin and deoxycholate. The sequence is that of Multidrug resistance protein MdtG from Escherichia coli (strain SMS-3-5 / SECEC).